The primary structure comprises 199 residues: Superoxide dismutase [Mn/Fe] 2 (199 aa).

4 residues coordinate Fe(3+): H27, H81, D161, and H165. H27, H81, D161, and H165 together coordinate Mn(2+).

It belongs to the iron/manganese superoxide dismutase family. In terms of assembly, homodimer. Can also form a heterodimer with SodA. The cofactor is Mn(2+). It depends on Fe(3+) as a cofactor.

It catalyses the reaction 2 superoxide + 2 H(+) = H2O2 + O2. Its function is as follows. Destroys superoxide anion radicals which are normally produced within the cells and which are toxic to biological systems. Catalyzes the dismutation of superoxide anion radicals into O2 and H2O2 by successive reduction and oxidation of the transition metal ion at the active site. The polypeptide is Superoxide dismutase [Mn/Fe] 2 (sodM) (Staphylococcus aureus (strain USA300)).